A 574-amino-acid chain; its full sequence is Golgin subfamily A member 6-like protein 4 (574 aa).

Over residues 1–11 (MWPQPRFPPHP) the composition is skewed to pro residues. Disordered regions lie at residues 1 to 77 (MWPQ…YGEG) and 491 to 552 (KELK…AAGG). The segment covering 51–62 (NGSSPDTATSGG) has biased composition (polar residues). A coiled-coil region spans residues 157-496 (SKVEQLQDET…EQQVKELKKS (340 aa)). Basic and acidic residues predominate over residues 491–504 (KELKKSGGAEEPRG). Over residues 508–523 (AAAARPVAGAPVPQGA) the composition is skewed to low complexity.

The protein belongs to the GOLGA6 family.

The protein is Golgin subfamily A member 6-like protein 4 (GOLGA6L4) of Homo sapiens (Human).